The primary structure comprises 143 residues: Large ribosomal subunit protein uL11 (143 aa).

It belongs to the universal ribosomal protein uL11 family. As to quaternary structure, part of the ribosomal stalk of the 50S ribosomal subunit. Interacts with L10 and the large rRNA to form the base of the stalk. L10 forms an elongated spine to which L12 dimers bind in a sequential fashion forming a multimeric L10(L12)X complex. One or more lysine residues are methylated.

In terms of biological role, forms part of the ribosomal stalk which helps the ribosome interact with GTP-bound translation factors. This Allorhizobium ampelinum (strain ATCC BAA-846 / DSM 112012 / S4) (Agrobacterium vitis (strain S4)) protein is Large ribosomal subunit protein uL11.